Consider the following 299-residue polypeptide: ATP phosphoribosyltransferase (299 aa).

It belongs to the ATP phosphoribosyltransferase family. Long subfamily. As to quaternary structure, equilibrium between an active dimeric form, an inactive hexameric form and higher aggregates. Interconversion between the various forms is largely reversible and is influenced by the natural substrates and inhibitors of the enzyme. It depends on Mg(2+) as a cofactor.

It is found in the cytoplasm. The catalysed reaction is 1-(5-phospho-beta-D-ribosyl)-ATP + diphosphate = 5-phospho-alpha-D-ribose 1-diphosphate + ATP. It participates in amino-acid biosynthesis; L-histidine biosynthesis; L-histidine from 5-phospho-alpha-D-ribose 1-diphosphate: step 1/9. Its activity is regulated as follows. Feedback inhibited by histidine. Functionally, catalyzes the condensation of ATP and 5-phosphoribose 1-diphosphate to form N'-(5'-phosphoribosyl)-ATP (PR-ATP). Has a crucial role in the pathway because the rate of histidine biosynthesis seems to be controlled primarily by regulation of HisG enzymatic activity. The protein is ATP phosphoribosyltransferase of Buchnera aphidicola subsp. Acyrthosiphon pisum (strain 5A).